The sequence spans 274 residues: Non-homologous end joining protein Ku (274 aa).

The region spanning 11–195 is the Ku domain; it reads ITFGLVNVPV…KYKITPKELS (185 aa).

Belongs to the prokaryotic Ku family. As to quaternary structure, homodimer. Interacts with LigD.

Functionally, with LigD forms a non-homologous end joining (NHEJ) DNA repair enzyme, which repairs dsDNA breaks with reduced fidelity. Binds linear dsDNA with 5'- and 3'- overhangs but not closed circular dsDNA nor ssDNA. Recruits and stimulates the ligase activity of LigD. This Coxiella burnetii (strain RSA 331 / Henzerling II) protein is Non-homologous end joining protein Ku.